The chain runs to 228 residues: Casparian strip membrane protein 2 (228 aa).

The Cytoplasmic segment spans residues 1–65 (MSTSDAAATV…FRRADRGSRC (65 aa)). A helical membrane pass occupies residues 66-86 (VALLDLVLRVAAFGPALAAAI). Topologically, residues 87–113 (ATGTSDETLSVFTQFFQFHARFDDFPA) are extracellular. A helical transmembrane segment spans residues 114-134 (LLFFMVANAIAAGYLVLSLPF). The Cytoplasmic segment spans residues 135-149 (SAVVVLRPQAIGLRH). Residues 150 to 170 (LLLICDLIIAALLTAAAAAAA) form a helical membrane-spanning segment. Residues 171–201 (AIVDLAHSGNQRANWVPICMQFHGFCQRTSG) lie on the Extracellular side of the membrane. A helical membrane pass occupies residues 202-222 (AVVASFLAVLVLLFLVILAAF). The Cytoplasmic portion of the chain corresponds to 223-228 (TIRKRC).

This sequence belongs to the Casparian strip membrane proteins (CASP) family. Homodimer and heterodimers.

It is found in the cell membrane. In terms of biological role, regulates membrane-cell wall junctions and localized cell wall deposition. Required for establishment of the Casparian strip membrane domain (CSD) and the subsequent formation of Casparian strips, a cell wall modification of the root endodermis that determines an apoplastic barrier between the intraorganismal apoplasm and the extraorganismal apoplasm and prevents lateral diffusion. This Zea mays (Maize) protein is Casparian strip membrane protein 2.